The following is a 724-amino-acid chain: Threonine--tRNA ligase 2, cytoplasmic (724 aa).

Residue Ala2 is modified to N-acetylalanine. Positions 44–72 (QAEGPCLTREVAQLRAENRELRHCLYRLR) form a coiled coil. The interval 90-112 (RAEAGRAAAGAQPPPSQSLEEDV) is disordered. Positions 155–220 (DSSNVITVRV…EGDATVELLT (66 aa)) constitute a TGS domain. A Phosphoserine modification is found at Ser451.

Belongs to the class-II aminoacyl-tRNA synthetase family. May be a component of the multisynthetase complex (MSC), a large multi-subunit complex which contains at least eight different aminoacyl-tRNA synthetases plus three auxillary subunits AIMP1, AIMP2 and EEF1E1. Interacts with the MSC components EPRS1, AIMP1, AIMP2 and KARS1.

It localises to the cytoplasm. The protein resides in the nucleus. It carries out the reaction tRNA(Thr) + L-threonine + ATP = L-threonyl-tRNA(Thr) + AMP + diphosphate + H(+). Functionally, catalyzes the attachment of threonine to tRNA(Thr) in a two-step reaction: threonine is first activated by ATP to form Thr-AMP and then transferred to the acceptor end of tRNA(Thr). Also edits incorrectly charged tRNA(Thr) via its editing domain, at the post-transfer stage. This is Threonine--tRNA ligase 2, cytoplasmic (TARS3) from Bos taurus (Bovine).